Consider the following 178-residue polypeptide: PRA1 family protein 2 (178 aa).

At 1–41 the chain is on the cytoplasmic side; the sequence is MSEVRLPPLRALDDFVLGSARLAAPDPGDPQRWCHRVINNL. The helical transmembrane segment at 42–62 threads the bilayer; that stretch reads LYYQTNYLLCFGISLALAGYI. The Extracellular segment spans residues 63–64; it reads RP. A helical membrane pass occupies residues 65-85; the sequence is LHTLLSALVVVVALGVLVWAA. At 86 to 96 the chain is on the cytoplasmic side; the sequence is ETRAAVRRCRR. A helical transmembrane segment spans residues 97–119; the sequence is SHPAACLAAVLAISLFILWAVGG. The Extracellular portion of the chain corresponds to 120–122; the sequence is AFT. A helical membrane pass occupies residues 123 to 140; the sequence is FLLSITAPVFLILLHASL. The Cytoplasmic segment spans residues 141 to 178; the sequence is RLRNLKNKIENKIESIGLKRTPMGLLLEALGQEQEAGS.

It belongs to the PRA1 family. In terms of assembly, interacts with CCR5 and GDE1.

It localises to the endosome membrane. Its function is as follows. May be involved in ER/Golgi transport and vesicular traffic. Plays a proapoptotic role in cerulenin-induced neuroblastoma apoptosis. The polypeptide is PRA1 family protein 2 (Praf2) (Mus musculus (Mouse)).